A 368-amino-acid chain; its full sequence is L-lactate oxidase (368 aa).

The FMN hydroxy acid dehydrogenase domain maps to 13 to 368; the sequence is VNAIDVLDLA…KQMKVKTTFA (356 aa). Y39 is a pyruvate binding site. FMN contacts are provided by residues 92–94, S121, and Q143; that span reads PIA. Residue Y145 coordinates pyruvate. T171 serves as a coordination point for FMN. R180 is a binding site for pyruvate. FMN-binding residues include K239 and S261. Residues H263 and R266 each coordinate pyruvate. H263 functions as the Proton acceptor in the catalytic mechanism. Residues 294–298 and R318 each bind FMN; that span reads DGGVQ.

It belongs to the FMN-dependent alpha-hydroxy acid dehydrogenase family. In terms of assembly, homotetramer. Requires FMN as cofactor.

It carries out the reaction (S)-lactate + O2 = pyruvate + H2O2. The enzyme catalyses 2-hydroxyoctanoate + O2 = 2-oxooctanoate + H2O2. In terms of biological role, catalyzes the oxidation of (S)-lactate (L-lactate) to pyruvate, with a reduction of O2 to H2O2. To a lesser extent is also able to use 2-hydroxyoctanoate as substrate. May be involved in the utilization of L-lactate as an energy source for growth. The protein is L-lactate oxidase of Lacticaseibacillus rhamnosus (strain LMS2-1).